The sequence spans 210 residues: Large ribosomal subunit protein uL3 (210 aa).

The tract at residues 139 to 165 (AEKVHRSPGSIGHATFPGKVFKGKKMP) is disordered.

This sequence belongs to the universal ribosomal protein uL3 family. As to quaternary structure, part of the 50S ribosomal subunit. Forms a cluster with proteins L14 and L19.

One of the primary rRNA binding proteins, it binds directly near the 3'-end of the 23S rRNA, where it nucleates assembly of the 50S subunit. The protein is Large ribosomal subunit protein uL3 of Maridesulfovibrio salexigens (strain ATCC 14822 / DSM 2638 / NCIMB 8403 / VKM B-1763) (Desulfovibrio salexigens).